Consider the following 175-residue polypeptide: MATQDSQGIKLFGKTITFNANITQTIKKEEQQQQQQPELQATTAVRSPSSDLTAEKRPDKIIPCPRCKSMETKFCYFNNYNVNQPRHFCKGCQRYWTAGGALRNVPVGAGRRKSKPPGRVGGFAELLGAATGAVDQVELDALLVEEWRAATASHGGFRHDFPVKRLRCYTDGQSC.

Positions 29 to 57 (EEQQQQQQPELQATTAVRSPSSDLTAEKR) are disordered. A compositionally biased stretch (polar residues) spans 37–52 (PELQATTAVRSPSSDL). The segment at 62–116 (IPCPRCKSMETKFCYFNNYNVNQPRHFCKGCQRYWTAGGALRNVPVGAGRRKSKP) adopts a Dof-type zinc-finger fold. Residues Cys-64, Cys-67, Cys-89, and Cys-92 each coordinate Zn(2+). The Nuclear localization signal motif lies at 162 to 168 (PVKRLRC).

The protein localises to the nucleus. In terms of biological role, transcription factor that binds specifically to a 5'-AA[AG]G-3' consensus core sequence. Acts as a negative regulator in the phytochrome-mediated light responses. Controls phyB-mediated end-of-day response and the phyA-mediated anthocyanin accumulation. Not involved in direct flowering time regulation. The protein is Dof zinc finger protein DOF1.5 (DOF1.5) of Arabidopsis thaliana (Mouse-ear cress).